The primary structure comprises 334 residues: RNA ligase 2 (334 aa).

Residues 1–234 (MFKKYSSLEN…KCKNSKFSEK (234 aa)) form an adenylyltransferase region. The AMP site is built by glutamate 34, lysine 35, isoleucine 36, asparagine 40, arginine 55, and glutamate 99. Lysine 35 acts as the N6-AMP-lysine intermediate in catalysis. Residues isoleucine 162, leucine 164, asparagine 166, glutamate 204, and tyrosine 206 each contribute to the Mg(2+) site. The AMP site is built by lysine 225 and lysine 227.

The protein belongs to the RNA ligase 2 family. It depends on Mg(2+) as a cofactor. Mn(2+) serves as cofactor.

The catalysed reaction is ATP + (ribonucleotide)n-3'-hydroxyl + 5'-phospho-(ribonucleotide)m = (ribonucleotide)n+m + AMP + diphosphate.. Repairs 3'-OH/5'-PO4 nicks in duplex RNA or RNA:DNA hybrid in which the broken 3'-OH strand is RNA. The nick ligation reaction entails three nucleotidyl transfer steps. In the first step, the RNA ligase reacts with ATP in the absence of nucleic acid to form a covalent ligase-AMP intermediate and release pyrophosphate. In step 2, the ligase-AMP binds to the nicked duplex nucleic acid and transfers the adenylate to the 5'-PO4 terminus to form an adenylylated nicked intermediate. In step 3, the RNA ligase directs the attack of the nick 3'-OH on the 5'-phosphoanhydride linkage, resulting in a repaired 3' - 5' phosphodiester and release of AMP. This chain is RNA ligase 2 (Y10A), found in Enterobacteria phage T4 (Bacteriophage T4).